Here is a 321-residue protein sequence, read N- to C-terminus: Probable cell division protein WhiA (321 aa).

Positions 275–308 form a DNA-binding region, H-T-H motif; sequence SLDELGRLADPPMTKDAVAGRIRRLLAMADKRAA.

This sequence belongs to the WhiA family.

In terms of biological role, involved in cell division and chromosome segregation. In Micrococcus luteus (strain ATCC 4698 / DSM 20030 / JCM 1464 / CCM 169 / CCUG 5858 / IAM 1056 / NBRC 3333 / NCIMB 9278 / NCTC 2665 / VKM Ac-2230) (Micrococcus lysodeikticus), this protein is Probable cell division protein WhiA.